The following is a 337-amino-acid chain: UDP-3-O-acylglucosamine N-acyltransferase (337 aa).

Residue histidine 238 is the Proton acceptor of the active site.

This sequence belongs to the transferase hexapeptide repeat family. LpxD subfamily. In terms of assembly, homotrimer.

The enzyme catalyses a UDP-3-O-[(3R)-3-hydroxyacyl]-alpha-D-glucosamine + a (3R)-hydroxyacyl-[ACP] = a UDP-2-N,3-O-bis[(3R)-3-hydroxyacyl]-alpha-D-glucosamine + holo-[ACP] + H(+). It functions in the pathway bacterial outer membrane biogenesis; LPS lipid A biosynthesis. Its function is as follows. Catalyzes the N-acylation of UDP-3-O-acylglucosamine using 3-hydroxyacyl-ACP as the acyl donor. Is involved in the biosynthesis of lipid A, a phosphorylated glycolipid that anchors the lipopolysaccharide to the outer membrane of the cell. This is UDP-3-O-acylglucosamine N-acyltransferase from Xanthomonas oryzae pv. oryzae (strain MAFF 311018).